The sequence spans 131 residues: Small ribosomal subunit protein uS9 (131 aa).

This sequence belongs to the universal ribosomal protein uS9 family.

The sequence is that of Small ribosomal subunit protein uS9 from Mycoplasmopsis synoviae (strain 53) (Mycoplasma synoviae).